The primary structure comprises 425 residues: UPF0761 membrane protein PXO_04555 (425 aa).

6 helical membrane passes run 48-68 (VFAL…FPAF), 105-125 (FTVA…HSIE), 154-174 (GTML…LPLF), 182-202 (LAEF…IVLI), 219-239 (GALL…VYLG), and 250-270 (ALSA…SVLL).

It belongs to the UPF0761 family.

The protein localises to the cell inner membrane. The sequence is that of UPF0761 membrane protein PXO_04555 from Xanthomonas oryzae pv. oryzae (strain PXO99A).